The primary structure comprises 154 residues: Myoglobin (154 aa).

In terms of domain architecture, Globin spans 2 to 148 (GLSDQEWQQV…FRNDMASKYK (147 aa)). Histidine 65 provides a ligand contact to nitrite. O2 is bound at residue histidine 65. Residue histidine 94 participates in heme b binding.

In terms of assembly, monomeric.

Its subcellular location is the cytoplasm. It localises to the sarcoplasm. The enzyme catalyses Fe(III)-heme b-[protein] + nitric oxide + H2O = Fe(II)-heme b-[protein] + nitrite + 2 H(+). The catalysed reaction is H2O2 + AH2 = A + 2 H2O. Functionally, monomeric heme protein which primary function is to store oxygen and facilitate its diffusion within muscle tissues. Reversibly binds oxygen through a pentacoordinated heme iron and enables its timely and efficient release as needed during periods of heightened demand. Depending on the oxidative conditions of tissues and cells, and in addition to its ability to bind oxygen, it also has a nitrite reductase activity whereby it regulates the production of bioactive nitric oxide. Under stress conditions, like hypoxia and anoxia, it also protects cells against reactive oxygen species thanks to its pseudoperoxidase activity. This chain is Myoglobin (MB), found in Struthio camelus (Common ostrich).